Reading from the N-terminus, the 408-residue chain is BRCA1-A complex subunit Abraxas 1 (408 aa).

Residues 7–155 form the MPN domain; it reads TAVMSGFVFG…KSTHRLEYAL (149 aa). The stretch at 210 to 273 forms a coiled coil; sequence ALAEVNRISN…EETGNKVSEA (64 aa). Over residues 360–372 the composition is skewed to polar residues; it reads LQLQKQHSQNGDS. The disordered stretch occupies residues 360–408; sequence LQLQKQHSQNGDSEGSDSERPLCNSGTETDGDILESLHMDVSRSKSPIF. Ser405 carries the post-translational modification Phosphoserine. A pSXXF motif motif is present at residues 405–408; that stretch reads SPIF.

This sequence belongs to the FAM175 family. Abraxas subfamily. As to quaternary structure, component of the BRCA1-A complex. Component of the BRISC complex. Interacts directly (when phosphorylated at Ser-405) with brca1. Homodimer. The phosphorylated homodimer can interact directly with two brca1 chains, giving rise to a heterotetramer. In terms of processing, phosphorylation of Ser-405 of the pSXXF motif by ATM or ATR constitutes a specific recognition motif for the BRCT domain of BRCA1.

The protein resides in the nucleus. Functionally, involved in DNA damage response and double-strand break (DSB) repair. Component of the BRCA1-A complex, acting as a central scaffold protein that assembles the various components of the complex and mediates the recruitment of brca1. The BRCA1-A complex specifically recognizes 'Lys-63'-linked ubiquitinated histones H2A and H2AX at DNA lesion sites, leading to target the brca1-bard1 heterodimer to sites of DNA damage at DSBs. This complex also possesses deubiquitinase activity that specifically removes 'Lys-63'-linked ubiquitin on histones H2A and H2AX. In Xenopus tropicalis (Western clawed frog), this protein is BRCA1-A complex subunit Abraxas 1.